The following is a 154-amino-acid chain: MSIAENKKAFFNYHIEERFEAGIVLAGWEIKSIRSGQIQLTDGYVVIKDGELFLIGLRINALRSASTHVNPEPDRTKKLLMHKAEIRRLIGKVEQKGHTLVPLNLHYKGGRVKVDVALAKGKAEHDKRHTIKDRDWQREQGRLMRHKVSAPHKD.

Residues 123 to 142 (AEHDKRHTIKDRDWQREQGR) are compositionally biased toward basic and acidic residues. The interval 123-154 (AEHDKRHTIKDRDWQREQGRLMRHKVSAPHKD) is disordered. The segment covering 143–154 (LMRHKVSAPHKD) has biased composition (basic residues).

The protein belongs to the SmpB family.

It localises to the cytoplasm. Functionally, required for rescue of stalled ribosomes mediated by trans-translation. Binds to transfer-messenger RNA (tmRNA), required for stable association of tmRNA with ribosomes. tmRNA and SmpB together mimic tRNA shape, replacing the anticodon stem-loop with SmpB. tmRNA is encoded by the ssrA gene; the 2 termini fold to resemble tRNA(Ala) and it encodes a 'tag peptide', a short internal open reading frame. During trans-translation Ala-aminoacylated tmRNA acts like a tRNA, entering the A-site of stalled ribosomes, displacing the stalled mRNA. The ribosome then switches to translate the ORF on the tmRNA; the nascent peptide is terminated with the 'tag peptide' encoded by the tmRNA and targeted for degradation. The ribosome is freed to recommence translation, which seems to be the essential function of trans-translation. The protein is SsrA-binding protein of Leptothrix cholodnii (strain ATCC 51168 / LMG 8142 / SP-6) (Leptothrix discophora (strain SP-6)).